A 1400-amino-acid chain; its full sequence is DNA-directed RNA polymerase subunit beta' (1400 aa).

Zn(2+) is bound by residues Cys71, Cys73, Cys86, and Cys89. Asp462, Asp464, and Asp466 together coordinate Mg(2+). Zn(2+)-binding residues include Cys811, Cys885, Cys892, and Cys895.

Belongs to the RNA polymerase beta' chain family. As to quaternary structure, the RNAP catalytic core consists of 2 alpha, 1 beta, 1 beta' and 1 omega subunit. When a sigma factor is associated with the core the holoenzyme is formed, which can initiate transcription. Mg(2+) serves as cofactor. Requires Zn(2+) as cofactor.

The enzyme catalyses RNA(n) + a ribonucleoside 5'-triphosphate = RNA(n+1) + diphosphate. Functionally, DNA-dependent RNA polymerase catalyzes the transcription of DNA into RNA using the four ribonucleoside triphosphates as substrates. This chain is DNA-directed RNA polymerase subunit beta', found in Brucella canis (strain ATCC 23365 / NCTC 10854 / RM-666).